The following is a 439-amino-acid chain: Homogentisate 1,2-dioxygenase (439 aa).

The Proton acceptor role is filled by His293. The Fe cation site is built by His336 and Glu342. The homogentisate site is built by Tyr351 and His372. His372 provides a ligand contact to Fe cation.

Belongs to the homogentisate dioxygenase family. In terms of assembly, hexamer; dimer of trimers. The cofactor is Fe cation.

It carries out the reaction homogentisate + O2 = 4-maleylacetoacetate + H(+). It functions in the pathway amino-acid degradation; L-phenylalanine degradation; acetoacetate and fumarate from L-phenylalanine: step 4/6. Functionally, involved in the catabolism of homogentisate (2,5-dihydroxyphenylacetate or 2,5-OH-PhAc), a central intermediate in the degradation of phenylalanine and tyrosine. Catalyzes the oxidative ring cleavage of the aromatic ring of homogentisate to yield maleylacetoacetate. The chain is Homogentisate 1,2-dioxygenase from Cupriavidus necator (strain ATCC 17699 / DSM 428 / KCTC 22496 / NCIMB 10442 / H16 / Stanier 337) (Ralstonia eutropha).